A 432-amino-acid chain; its full sequence is Alpha-ketoglutarate permease (432 aa).

Topologically, residues 1-32 (MAESTVTADSKLTSSDTRRRIWAIVGASSGNL) are cytoplasmic. The helical transmembrane segment at 33–53 (VEWFDFYVYSFCSLYFAHIFF) threads the bilayer. Residues 54–62 (PSGNTTTQL) are Periplasmic-facing. Residues 63–83 (LQTAGVFAAGFLMRPIGGWLF) form a helical membrane-spanning segment. Over 84–95 (GRIADKHGRKKS) the chain is Cytoplasmic. Residues 96–116 (MLLSVCMMCFGSLVIACLPGY) form a helical membrane-spanning segment. The Periplasmic segment spans residues 117 to 118 (ET). A helical membrane pass occupies residues 119–139 (IGTWAPALLLLARLFQGLSVG). Residues 140–162 (GEYGTSATYMSEVAVEGRKGFYA) are Cytoplasmic-facing. Residues 163-183 (SFQYVTLIGGQLLALLVVVVL) form a helical membrane-spanning segment. At 184–193 (QHTMEDAALR) the chain is on the periplasmic side. The helical transmembrane segment at 194-214 (EWGWRIPFALGAVLAVVALWL) threads the bilayer. At 215-243 (RRQLDETSQQETRALKEAGSLKGLWRNRR) the chain is on the cytoplasmic side. The chain crosses the membrane as a helical span at residues 244–264 (AFIMVLGFTAAGSLCFYTFTT). The Periplasmic portion of the chain corresponds to 265 to 279 (YMQKYLVNTAGMHAN). A helical membrane pass occupies residues 280–300 (VASGIMTAALFVFMLIQPLIG). The Cytoplasmic portion of the chain corresponds to 301 to 309 (ALSDKIGRR). Residues 310–330 (TSMLCFGSLAAIFTVPILSAL) form a helical membrane-spanning segment. The Periplasmic portion of the chain corresponds to 331–339 (QNVSSPYAA). Residues 340-360 (FGLVMCALLIVSFYTSISGIL) form a helical membrane-spanning segment. The Cytoplasmic segment spans residues 361 to 373 (KAEMFPAQVRALG). Residues 374 to 394 (VGLSYAVANAIFGGSAEYVAL) form a helical membrane-spanning segment. Over 395–402 (SLKSIGME) the chain is Periplasmic. The chain crosses the membrane as a helical span at residues 403–423 (TAFFWYVTLMAVVAFLVSLML). The Cytoplasmic segment spans residues 424-432 (HRKGKGMRL).

It belongs to the major facilitator superfamily. Metabolite:H+ Symporter (MHS) family (TC 2.A.1.6) family.

It is found in the cell inner membrane. Functionally, uptake of alpha-ketoglutarate across the boundary membrane with the concomitant import of a cation (symport system). In Escherichia coli (strain K12), this protein is Alpha-ketoglutarate permease (kgtP).